Here is a 970-residue protein sequence, read N- to C-terminus: Protein translocase subunit SecA (970 aa).

Residues glutamine 99, 117-121, and aspartate 631 each bind ATP; that span reads GEGKT.

Belongs to the SecA family. In terms of assembly, monomer and homodimer. Part of the essential Sec protein translocation apparatus which comprises SecA, SecYEG and auxiliary proteins SecDF. Other proteins may also be involved.

It is found in the cell inner membrane. Its subcellular location is the cytoplasm. It catalyses the reaction ATP + H2O + cellular proteinSide 1 = ADP + phosphate + cellular proteinSide 2.. In terms of biological role, part of the Sec protein translocase complex. Interacts with the SecYEG preprotein conducting channel. Has a central role in coupling the hydrolysis of ATP to the transfer of proteins into and across the cell membrane, serving as an ATP-driven molecular motor driving the stepwise translocation of polypeptide chains across the membrane. The polypeptide is Protein translocase subunit SecA (Chlamydia caviae (strain ATCC VR-813 / DSM 19441 / 03DC25 / GPIC) (Chlamydophila caviae)).